The primary structure comprises 72 residues: Conotoxin VnMKLT2-0221 (72 aa).

The first 22 residues, 1-22 (MKLTCVLIVAVLFLTACQLTTA), serve as a signal peptide directing secretion. Residues 23–45 (ASYARSERQHPDLGSSDQNSKLT) constitute a propeptide that is removed on maturation. Residues 26-45 (ARSERQHPDLGSSDQNSKLT) are disordered. Disulfide bonds link cysteine 48-cysteine 62, cysteine 55-cysteine 66, and cysteine 61-cysteine 71.

It belongs to the conotoxin O1 superfamily. As to expression, expressed by the venom duct.

It is found in the secreted. This chain is Conotoxin VnMKLT2-0221, found in Conus ventricosus (Mediterranean cone).